Consider the following 425-residue polypeptide: Arogenate dehydratase 5, chloroplastic (425 aa).

The N-terminal 38 residues, 1–38, are a transit peptide targeting the chloroplast; the sequence is MQTISPAFSCDLKSVIQPNLTAKKARYSHVNGKRVSVR. The Prephenate dehydratase domain occupies 127 to 304; that stretch reads RVAYQGVPGA…NVTRFLMLAR (178 aa). The 92-residue stretch at 320-411 folds into the ACT domain; that stretch reads VFAAQEHKGT…SFLRVLGSYP (92 aa).

Expressed in roots, leaves, stems, flowers and siliques. More abundant in stems and roots.

The protein localises to the plastid. It localises to the chloroplast stroma. It catalyses the reaction L-arogenate + H(+) = L-phenylalanine + CO2 + H2O. Its pathway is amino-acid biosynthesis; L-phenylalanine biosynthesis; L-phenylalanine from L-arogenate: step 1/1. Converts the prephenate produced from the shikimate-chorismate pathway into phenylalanine. This is Arogenate dehydratase 5, chloroplastic from Arabidopsis thaliana (Mouse-ear cress).